A 260-amino-acid polypeptide reads, in one-letter code: Ribonuclease PH (260 aa).

Phosphate-binding positions include R88 and 126–128 (GTR).

This sequence belongs to the RNase PH family. Homohexameric ring arranged as a trimer of dimers.

The enzyme catalyses tRNA(n+1) + phosphate = tRNA(n) + a ribonucleoside 5'-diphosphate. Its function is as follows. Phosphorolytic 3'-5' exoribonuclease that plays an important role in tRNA 3'-end maturation. Removes nucleotide residues following the 3'-CCA terminus of tRNAs; can also add nucleotides to the ends of RNA molecules by using nucleoside diphosphates as substrates, but this may not be physiologically important. Probably plays a role in initiation of 16S rRNA degradation (leading to ribosome degradation) during starvation. This chain is Ribonuclease PH, found in Mycolicibacterium gilvum (strain PYR-GCK) (Mycobacterium gilvum (strain PYR-GCK)).